The sequence spans 377 residues: Succinyl-diaminopimelate desuccinylase (377 aa).

His-71 serves as a coordination point for Zn(2+). Residue Asp-73 is part of the active site. Asp-102 is a binding site for Zn(2+). Glu-132 acts as the Proton acceptor in catalysis. Zn(2+)-binding residues include Glu-133, Glu-161, and His-346.

The protein belongs to the peptidase M20A family. DapE subfamily. As to quaternary structure, homodimer. Zn(2+) serves as cofactor. Co(2+) is required as a cofactor.

The catalysed reaction is N-succinyl-(2S,6S)-2,6-diaminopimelate + H2O = (2S,6S)-2,6-diaminopimelate + succinate. The protein operates within amino-acid biosynthesis; L-lysine biosynthesis via DAP pathway; LL-2,6-diaminopimelate from (S)-tetrahydrodipicolinate (succinylase route): step 3/3. Its function is as follows. Catalyzes the hydrolysis of N-succinyl-L,L-diaminopimelic acid (SDAP), forming succinate and LL-2,6-diaminopimelate (DAP), an intermediate involved in the bacterial biosynthesis of lysine and meso-diaminopimelic acid, an essential component of bacterial cell walls. The protein is Succinyl-diaminopimelate desuccinylase of Rhizorhabdus wittichii (strain DSM 6014 / CCUG 31198 / JCM 15750 / NBRC 105917 / EY 4224 / RW1) (Sphingomonas wittichii).